Here is a 139-residue protein sequence, read N- to C-terminus: ATP synthase epsilon chain (139 aa).

Belongs to the ATPase epsilon chain family. As to quaternary structure, F-type ATPases have 2 components, CF(1) - the catalytic core - and CF(0) - the membrane proton channel. CF(1) has five subunits: alpha(3), beta(3), gamma(1), delta(1), epsilon(1). CF(0) has three main subunits: a, b and c.

Its subcellular location is the cell inner membrane. Its function is as follows. Produces ATP from ADP in the presence of a proton gradient across the membrane. The polypeptide is ATP synthase epsilon chain (Serratia proteamaculans (strain 568)).